A 340-amino-acid polypeptide reads, in one-letter code: Ketol-acid reductoisomerase (NADP(+)) (340 aa).

One can recognise a KARI N-terminal Rossmann domain in the interval 1-183 (MAITVYYDKD…GGGRTGIIET (183 aa)). NADP(+)-binding positions include 26–29 (FGSQ), Arg-49, Ser-52, Ser-54, and 84–87 (DEIQ). His-109 is a catalytic residue. Position 135 (Gly-135) interacts with NADP(+). A KARI C-terminal knotted domain is found at 184–329 (TFKAETETDL…RNLRAMMPWI (146 aa)). Mg(2+) contacts are provided by Asp-192, Glu-196, Glu-228, and Glu-232. Ser-253 lines the substrate pocket.

Belongs to the ketol-acid reductoisomerase family. It depends on Mg(2+) as a cofactor.

It catalyses the reaction (2R)-2,3-dihydroxy-3-methylbutanoate + NADP(+) = (2S)-2-acetolactate + NADPH + H(+). The catalysed reaction is (2R,3R)-2,3-dihydroxy-3-methylpentanoate + NADP(+) = (S)-2-ethyl-2-hydroxy-3-oxobutanoate + NADPH + H(+). It functions in the pathway amino-acid biosynthesis; L-isoleucine biosynthesis; L-isoleucine from 2-oxobutanoate: step 2/4. The protein operates within amino-acid biosynthesis; L-valine biosynthesis; L-valine from pyruvate: step 2/4. Its function is as follows. Involved in the biosynthesis of branched-chain amino acids (BCAA). Catalyzes an alkyl-migration followed by a ketol-acid reduction of (S)-2-acetolactate (S2AL) to yield (R)-2,3-dihydroxy-isovalerate. In the isomerase reaction, S2AL is rearranged via a Mg-dependent methyl migration to produce 3-hydroxy-3-methyl-2-ketobutyrate (HMKB). In the reductase reaction, this 2-ketoacid undergoes a metal-dependent reduction by NADPH to yield (R)-2,3-dihydroxy-isovalerate. The protein is Ketol-acid reductoisomerase (NADP(+)) of Campylobacter jejuni subsp. jejuni serotype O:23/36 (strain 81-176).